The primary structure comprises 438 residues: Aspartyl protease 25 (438 aa).

Residues 1–23 form the signal peptide; the sequence is MAATTTIPLLLLLLAATVAAAAA. Residues 79-433 form the Peptidase A1 domain; sequence YVVRAGLGSP…DVANSRVGFA (355 aa). Asp-97 is a catalytic residue. Cys-107 and Cys-113 are oxidised to a cystine. Residues Asn-123, Asn-193, and Asn-282 are each glycosylated (N-linked (GlcNAc...) asparagine). Residue Asp-313 is part of the active site. A disulfide bridge connects residues Cys-352 and Cys-394.

This sequence belongs to the peptidase A1 family.

In terms of biological role, anther-specific aspartic protease involved in tapetal programmed cell death (PCD). Directly regulated by the transcription factor EAT1/DTD in anthers during tapetum PCD and degeneration. The chain is Aspartyl protease 25 from Oryza sativa subsp. japonica (Rice).